The following is a 622-amino-acid chain: MSFKVNWNSLETEPLTNWTKELLTSALNSGKSPNILASNITIKDLNFGKIAPDFEILEIGELDRDRFRGIFKIDYQGDFHLTLHTKVQANPLNIYYHNSLEKEVCNCTQDEFITPNFLLSNEQFAIPLDLKLSDIKINGIGIIVFSKSKGLTLVFRNDPLDSIKVSSTFDTVQVLANFLQKQIENQIRDLFRETLPTLIHQLSLKYLSLDNNINEIKSKLSQQDSVSMTNNELASSLKLFDDEENEFPLIYSSKNLQKNMQLFKSRETFRLSVPKFKNIVQRTRLDKFTKSYPNLLNSLYANNVDLQHRYVNNINHNNNNNASSTGIPIELLLSHDDKQHYDKTDSLLKDISSIQANNFYKYSNKDAPTKPKRRRIKVHKKNKSKHDETTTTTSKPSELQNVDNTFMESRSISPQETIDTVSTLIESVPMTRNVSSNIKSPTLDTLSTGSSSAASSQVIAHPTPKRAYQPNDTTTAATTTLNKENHIDYIKARNLYQDFIQMSQSPGYYDKVISNGGGIGLGNNNGGNYFGLERTISSSPIKHLNKDKKSINYIDTSKINEKLNQFRFDGGKNNNTNDNNSKNFRPGFTRNESNGQQGILFEAFNFPSMTAAATPPPPPPYC.

Residues 1–204 enclose the SMP-LTD domain; that stretch reads MSFKVNWNSL…LPTLIHQLSL (204 aa). Disordered stretches follow at residues 362 to 399 and 568 to 592; these read YSNKDAPTKPKRRRIKVHKKNKSKHDETTTTTSKPSEL and FDGGKNNNTNDNNSKNFRPGFTRNE. Positions 370-384 are enriched in basic residues; sequence KPKRRRIKVHKKNKS. The span at 390-399 shows a compositional bias: polar residues; that stretch reads TTTTSKPSEL. The span at 571 to 583 shows a compositional bias: low complexity; sequence GKNNNTNDNNSKN.

The protein belongs to the MDM34 family. Component of the ER-mitochondria encounter structure (ERMES) or MDM complex, composed of MMM1, MDM10, MDM12 and MDM34.

It is found in the mitochondrion outer membrane. Component of the ERMES/MDM complex, which serves as a molecular tether to connect the endoplasmic reticulum (ER) and mitochondria. Components of this complex are involved in the control of mitochondrial shape and protein biogenesis, and function in nonvesicular lipid trafficking between the ER and mitochondria. MDM34 is required for the interaction of the ER-resident membrane protein MMM1 and the outer mitochondrial membrane-resident beta-barrel protein MDM10. This chain is Mitochondrial distribution and morphology protein 34, found in Candida dubliniensis (strain CD36 / ATCC MYA-646 / CBS 7987 / NCPF 3949 / NRRL Y-17841) (Yeast).